The chain runs to 313 residues: Pre-mRNA-splicing factor 38A (313 aa).

The tract at residues 1-179 is N-terminal protein interaction domain; that stretch reads MANRTVKDAN…VLEEAELLDP (179 aa). Residues 172-201 are a coiled coil; the sequence is EEAELLDPRISALEEDLDEVETSEEEDDED. The segment at 182 to 313 is disordered; that stretch reads SALEEDLDEV…SHKRSRRGNE (132 aa). Over residues 184 to 202 the composition is skewed to acidic residues; the sequence is LEEDLDEVETSEEEDDEDE. A compositionally biased stretch (basic and acidic residues) spans 203-224; it reads KPERMQSPEPHRRSYRDMDRPR. Composition is skewed to basic residues over residues 225–250, 260–294, and 302–313; these read RSPS…RSPS, HRSK…RSHS, and KKSHKRSRRGNE.

Belongs to the PRP38 family. In terms of assembly, component of the spliceosome B complex.

It is found in the nucleus. Functionally, involved in pre-mRNA splicing as a component of the spliceosome. The polypeptide is Pre-mRNA-splicing factor 38A (prpf38a) (Danio rerio (Zebrafish)).